A 184-amino-acid polypeptide reads, in one-letter code: Ribosome-recycling factor (184 aa).

This sequence belongs to the RRF family.

It localises to the cytoplasm. Functionally, responsible for the release of ribosomes from messenger RNA at the termination of protein biosynthesis. May increase the efficiency of translation by recycling ribosomes from one round of translation to another. The polypeptide is Ribosome-recycling factor (Natranaerobius thermophilus (strain ATCC BAA-1301 / DSM 18059 / JW/NM-WN-LF)).